Here is a 427-residue protein sequence, read N- to C-terminus: Serine--tRNA ligase (427 aa).

Residue 231–233 (TAE) coordinates L-serine. 262–264 (RSE) is an ATP binding site. Residue Glu-285 participates in L-serine binding. 349–352 (EISS) is an ATP binding site. Position 385 (Ser-385) interacts with L-serine.

The protein belongs to the class-II aminoacyl-tRNA synthetase family. Type-1 seryl-tRNA synthetase subfamily. Homodimer. The tRNA molecule binds across the dimer.

The protein localises to the cytoplasm. The catalysed reaction is tRNA(Ser) + L-serine + ATP = L-seryl-tRNA(Ser) + AMP + diphosphate + H(+). The enzyme catalyses tRNA(Sec) + L-serine + ATP = L-seryl-tRNA(Sec) + AMP + diphosphate + H(+). Its pathway is aminoacyl-tRNA biosynthesis; selenocysteinyl-tRNA(Sec) biosynthesis; L-seryl-tRNA(Sec) from L-serine and tRNA(Sec): step 1/1. In terms of biological role, catalyzes the attachment of serine to tRNA(Ser). Is also able to aminoacylate tRNA(Sec) with serine, to form the misacylated tRNA L-seryl-tRNA(Sec), which will be further converted into selenocysteinyl-tRNA(Sec). This chain is Serine--tRNA ligase, found in Sinorhizobium medicae (strain WSM419) (Ensifer medicae).